A 702-amino-acid chain; its full sequence is Ribosomal RNA large subunit methyltransferase K/L (702 aa).

Residues 43 to 154 (LIYQSLMWSR…KETASIALDL (112 aa)) form the THUMP domain.

Belongs to the methyltransferase superfamily. RlmKL family.

It localises to the cytoplasm. The catalysed reaction is guanosine(2445) in 23S rRNA + S-adenosyl-L-methionine = N(2)-methylguanosine(2445) in 23S rRNA + S-adenosyl-L-homocysteine + H(+). It catalyses the reaction guanosine(2069) in 23S rRNA + S-adenosyl-L-methionine = N(2)-methylguanosine(2069) in 23S rRNA + S-adenosyl-L-homocysteine + H(+). Its function is as follows. Specifically methylates the guanine in position 2445 (m2G2445) and the guanine in position 2069 (m7G2069) of 23S rRNA. The sequence is that of Ribosomal RNA large subunit methyltransferase K/L from Salmonella typhi.